Reading from the N-terminus, the 423-residue chain is Maltooligosaccharide ABC transporter solute-binding lipoprotein (423 aa).

An N-terminal signal peptide occupies residues 1 to 24; that stretch reads MSSKFMKSTAVLGTVTLASLLLVA. A lipid anchor (N-palmitoyl cysteine) is attached at cysteine 25. A lipid anchor (S-diacylglycerol cysteine) is attached at cysteine 25. Substrate is bound by residues tyrosine 52, aspartate 77, aspartate 83, 103 to 104, glutamate 148, aspartate 193, asparagine 196, 251 to 254, tryptophan 274, and lysine 307; these read DR and EGAG.

The protein belongs to the bacterial solute-binding protein 1 family.

It is found in the cell membrane. Part of an ABC transporter complex involved in the uptake of maltodextrins. Binds glycogen-derived linear maltooligosaccharides increasing in size from maltotriose to maltooctaose with the highest affinity for maltotriose. Has a very weak affinity for maltose. Has also a very low affinity for maltotetraitol, indicating that the binding is selective for maltooligosaccharides with an intact reducing end. The chain is Maltooligosaccharide ABC transporter solute-binding lipoprotein (malX) from Streptococcus pneumoniae (strain ATCC BAA-255 / R6).